The primary structure comprises 377 residues: Presenilin-associated rhomboid-like protein, mitochondrial (377 aa).

A mitochondrion-targeting transit peptide spans 1–52 (MAWRGWAQRGWGCGQAWTLPVCGGSYEELTAALAPSRLLRRRFNFFIQQKCG). Residues 53–99 (FRKAPRKVEPRRSDTSSEAYKRSALIPPVEETAFYPSPYPIRTLVKP) are Mitochondrial matrix-facing. A phosphoserine mark is found at serine 65 and serine 68. The chain crosses the membrane as a helical span at residues 100-119 (LFFTVGFTGCAFGSAAIWQY). The Mitochondrial intermembrane segment spans residues 120 to 165 (ESLKSKVQSYFDGIKADWLDSIRPQKEGDFRKEINKWWNNLSDGQR). A helical transmembrane segment spans residues 166 to 185 (TVTGIIAANVFVFCLWRVPS). The Mitochondrial matrix portion of the chain corresponds to 186-205 (LQRTMIRYFTSNPASKVLCS). Residues 206–228 (PMLLSTFSHFSLFHMAANMYVLW) traverse the membrane as a helical segment. The Mitochondrial intermembrane segment spans residues 229–242 (SFSSSIVNILGQEQ). A helical transmembrane segment spans residues 243–260 (FMAVYLSAGVISTFVSYV). Over 261–270 (CKVATGRYGP) the chain is Mitochondrial matrix. A helical transmembrane segment spans residues 271–287 (SLGASGAIMTVLAAVCT). Serine 275 (nucleophile) is an active-site residue. Over 288–293 (KIPEGR) the chain is Mitochondrial intermembrane. A helical membrane pass occupies residues 294 to 316 (LAIIFLPMFTFTAGNALKAIIAM). Over 317 to 330 (DTAGMILGWKFFDH) the chain is Mitochondrial matrix. A helical transmembrane segment spans residues 331–352 (AAHLGGALFGIWYITYGHELIW). Residue histidine 333 is part of the active site. Residues 353-377 (KNREPLVKIWHEMRTNSPKKGGGSK) are Mitochondrial intermembrane-facing.

It belongs to the peptidase S54 family. Interacts with PSEN1 and PSEN2. Binds OPA1. In terms of processing, P-beta is proteolytically processed (beta-cleavage) in a PARL-dependent manner.

It localises to the mitochondrion inner membrane. The protein localises to the nucleus. The enzyme catalyses Cleaves type-1 transmembrane domains using a catalytic dyad composed of serine and histidine that are contributed by different transmembrane domains.. Required for the control of apoptosis during postnatal growth. Essential for proteolytic processing of an antiapoptotic form of OPA1 which prevents the release of mitochondrial cytochrome c in response to intrinsic apoptotic signals. Required for the maturation of PINK1 into its 52kDa mature form after its cleavage by mitochondrial-processing peptidase (MPP). Promotes cleavage of serine/threonine-protein phosphatase PGAM5 in damaged mitochondria in response to loss of mitochondrial membrane potential. Mediates differential cleavage of PINK1 and PGAM5 depending on the health status of mitochondria, disassociating from PINK1 and associating with PGAM5 in response to mitochondrial membrane potential loss. Required for processing of CLPB into a form with higher protein disaggregase activity by removing an autoinhibitory N-terminal peptide. Promotes processing of DIABLO/SMAC in the mitochondrion which is required for DIABLO apoptotic activity. Also required for cleavage of STARD7 and TTC19. Promotes changes in mitochondria morphology regulated by phosphorylation of P-beta domain. The protein is Presenilin-associated rhomboid-like protein, mitochondrial (PARL) of Bos taurus (Bovine).